The sequence spans 474 residues: MTVKTRFAPSPTGYLHVGGARTALYSWLFAKNQGGEFVLRIEDTDLERNSQEAVDAIIEGMHWMGMEWDEGPYYQSKRFDRYNEVVDQLLAEDKAYKCYASKELLDEIRAEQEANKEMARYDANHPKIVAANAAAKEGDACVIRFRNPKEGSVVFDDQIRGRIEISNSQLDDLIIRRTDGAPTYNFVVVVDDWDMGITQVIRGEDHINNTPRQINIYEALGAPVPMFAHCAMILGDDGAKLSKRHGAVSVMQYRDEGYLPNALNNYLVRLGWSHGDQEIFSQEEMINLFSLSAVSKSASAFNTDKLLWLNNHYIKSSEPEYVAKYLQWHLDQKEISLDNGPAITEVIKLVGERCNTLIELAEQSRYFYQDFEEFEAGAAKKHLRGVAKGPLELALAKVEALEEWTTENLHNVIEEVCAELEIGMGKIGMPLRVAVTGGGQSPSVDAVMQLVGKERVVARIKMALAFIAEREANA.

The 'HIGH' region motif lies at 9–19; the sequence is PSPTGYLHVGG. Positions 240–244 match the 'KMSKS' region motif; that stretch reads KLSKR. Lysine 243 contributes to the ATP binding site.

The protein belongs to the class-I aminoacyl-tRNA synthetase family. Glutamate--tRNA ligase type 1 subfamily. As to quaternary structure, monomer.

Its subcellular location is the cytoplasm. It catalyses the reaction tRNA(Glu) + L-glutamate + ATP = L-glutamyl-tRNA(Glu) + AMP + diphosphate. Catalyzes the attachment of glutamate to tRNA(Glu) in a two-step reaction: glutamate is first activated by ATP to form Glu-AMP and then transferred to the acceptor end of tRNA(Glu). The chain is Glutamate--tRNA ligase from Aliivibrio fischeri (strain MJ11) (Vibrio fischeri).